The following is a 116-amino-acid chain: NADPH-dependent 7-cyano-7-deazaguanine reductase (116 aa).

C31 functions as the Thioimide intermediate in the catalytic mechanism. D38 serves as the catalytic Proton donor. Residues V53 to L55 and Y72 to E73 each bind substrate.

Belongs to the GTP cyclohydrolase I family. QueF type 1 subfamily.

The protein localises to the cytoplasm. It catalyses the reaction 7-aminomethyl-7-carbaguanine + 2 NADP(+) = 7-cyano-7-deazaguanine + 2 NADPH + 3 H(+). Its pathway is tRNA modification; tRNA-queuosine biosynthesis. Functionally, catalyzes the NADPH-dependent reduction of 7-cyano-7-deazaguanine (preQ0) to 7-aminomethyl-7-deazaguanine (preQ1). The chain is NADPH-dependent 7-cyano-7-deazaguanine reductase from Chlorobium phaeobacteroides (strain DSM 266 / SMG 266 / 2430).